A 562-amino-acid polypeptide reads, in one-letter code: Sperm-tail PG-rich repeat-containing protein 2 (562 aa).

3 STPGR repeats span residues 21 to 31 (GPGTYNINRSL), 60 to 73 (SPGPGQYNSDITRN), and 96 to 118 (PGPGAYNVTNDVSPARKIKAKSP). Disordered stretches follow at residues 114-136 (KAKSPKITSKAVRPSLSPAAPSI) and 192-215 (SGRREPLKGADEPGPGHYELQEDQ). Residues 127–136 (PSLSPAAPSI) show a composition bias toward low complexity. A compositionally biased stretch (basic and acidic residues) spans 193–202 (GRREPLKGAD). STPGR repeat units lie at residues 204-227 (PGPGHYELQEDQTVQYENVNVKRE), 253-271 (PGPGQYYIKSQFETSSNTH), 336-350 (TPGPGAYNMFGYGLA), 385-409 (TPGPTQYKVEKTNEALYKKQSTAAF), 425-462 (TPPPGSYNVSQSFEKTQCLHQYSKPRNENARKRQSCFL), and 478-492 (TPGPAYYSPDVKSSS). The tract at residues 543-562 (STRSLSSHRSWRKPTAHSSA) is disordered. A compositionally biased stretch (basic residues) spans 551–562 (RSWRKPTAHSSA).

This Danio rerio (Zebrafish) protein is Sperm-tail PG-rich repeat-containing protein 2 (stpg2).